The sequence spans 251 residues: Core protein VP8 (251 aa).

The propeptide at 1–32 is removed by core protease OPG083; sequence MSLLLENLIEEDTIFFAGSISEYDDLQMVIAG.

This sequence belongs to the orthopoxvirus OPG098 family. Undergoes morphogenesis-associated proteolysis which cleaves the 28 kDa to a 25-kDa product. Proteolytic cleavage of major core proteins P4a (OPG136), P4b (OPG129), and VP8 (OPG098), which occurs at a late stage of core formation, is required for production of infectious mature virions (MV).

The protein resides in the virion. Its subcellular location is the host cytoplasm. Major core structural protein. This is Core protein VP8 (OPG098) from Monkeypox virus.